The chain runs to 575 residues: Dihydroxy-acid dehydratase (575 aa).

Positions 1 to 27 (MSNQERQERPEKDPDLRSTEVTEGYEK) are disordered. Cys61 provides a ligand contact to [2Fe-2S] cluster. Asp93 provides a ligand contact to Mg(2+). Position 134 (Cys134) interacts with [2Fe-2S] cluster. Mg(2+)-binding residues include Asp135 and Lys136. The residue at position 136 (Lys136) is an N6-carboxylysine. Cys206 lines the [2Fe-2S] cluster pocket. A Mg(2+)-binding site is contributed by Glu460. The Proton acceptor role is filled by Ser486.

It belongs to the IlvD/Edd family. In terms of assembly, homodimer. Requires [2Fe-2S] cluster as cofactor. Mg(2+) serves as cofactor.

It carries out the reaction (2R)-2,3-dihydroxy-3-methylbutanoate = 3-methyl-2-oxobutanoate + H2O. The catalysed reaction is (2R,3R)-2,3-dihydroxy-3-methylpentanoate = (S)-3-methyl-2-oxopentanoate + H2O. It functions in the pathway amino-acid biosynthesis; L-isoleucine biosynthesis; L-isoleucine from 2-oxobutanoate: step 3/4. Its pathway is amino-acid biosynthesis; L-valine biosynthesis; L-valine from pyruvate: step 3/4. Functions in the biosynthesis of branched-chain amino acids. Catalyzes the dehydration of (2R,3R)-2,3-dihydroxy-3-methylpentanoate (2,3-dihydroxy-3-methylvalerate) into 2-oxo-3-methylpentanoate (2-oxo-3-methylvalerate) and of (2R)-2,3-dihydroxy-3-methylbutanoate (2,3-dihydroxyisovalerate) into 2-oxo-3-methylbutanoate (2-oxoisovalerate), the penultimate precursor to L-isoleucine and L-valine, respectively. The protein is Dihydroxy-acid dehydratase of Haloarcula marismortui (strain ATCC 43049 / DSM 3752 / JCM 8966 / VKM B-1809) (Halobacterium marismortui).